We begin with the raw amino-acid sequence, 410 residues long: MSLPHLSLADARNLHLAAQGLLNKPRRRASLEDIPATISRMSLLQIDTINIVARSPYLVLFSRLGNYPAQWLDESLARGELMEYWAHEACFMPRSDFRLIRHRMLAPEKMGWKYKDAWMQEHEAEIAQLIQHIHDKGPVRSADFEHPRKGASGWWEWKPHKRHLEGLFTAGKVMVIERRNFQRVYDLTHRVMPDWDDERDLVSQTEAEIIMLDNSARSLGIFREQWLADYYRLKRPALAAWREARAEQQQIIAVHVEKLGNLWLHDDLLPLLERALAGKLTATHSAVLSPFDPVVWDRKRAEQLFDFSYRLECYTPAPKRQYGYFVLPLLHRGQLVGRMDAKMHRQTGILEVISLWLQEGIKPTTTLQKGLRQAITDFANWQQATRVTLGCCPQGLFTDCRTGWEIDPVA.

The QXD; important for activity signature appears at 45–47 (QID).

It belongs to the DNA glycosylase AlkZ-like family.

Functionally, DNA glycosylase involved in the repair of interstrand DNA cross-links (ICLs), which are highly toxic DNA lesions that covalently tether the opposing strands of DNA, thereby inhibiting essential cellular processes such as DNA replication and transcription. Acts by unhooking both sides of the ICLs, forming abasic (AP) sites on both strands. Unhooks ICLs derived from various cross-linking agents, including azinomycin B (AZB) and mechlorethamine, also known as nitrogen mustard (NM), protecting cells from the toxicity of these cross-linking agents. In vitro, also acts on monoadducts and can catalyze the excision of N7-methylguanine (7mGua) from an oligonucleotide containing N7-methyldeoxyguanosine (d7mG). Shows no unhooking activity toward FaPy-ICLs. The polypeptide is Interstrand DNA cross-link repair glycosylase (ycaQ) (Escherichia coli (strain K12)).